The chain runs to 246 residues: MTHSNRMLLGVNIDHVATLRQARGTRYPDPVKAALDAEEAGADGITVHLREDRRHIQERDVVLLKDVLQTRMNFEMGVTEEMMAFAEKIRPAHICLVPETRQELTTEGGLDVAGQEARIKAAVERLARTGAEVSLFIDADERQIEASRRVGAPAIELHTGRYADAETPTEVAEELKRIVEGVAFGVGHGLIVNAGHGLHYHNVEAVAAIKGINELNIGHALVAHALFVGFKAAVAEMKALIVAASR.

N12 lines the 3-amino-2-oxopropyl phosphate pocket. A 1-deoxy-D-xylulose 5-phosphate-binding site is contributed by D14–H15. R23 provides a ligand contact to 3-amino-2-oxopropyl phosphate. H48 serves as the catalytic Proton acceptor. The 1-deoxy-D-xylulose 5-phosphate site is built by R50 and H55. E75 acts as the Proton acceptor in catalysis. T105 serves as a coordination point for 1-deoxy-D-xylulose 5-phosphate. H196 acts as the Proton donor in catalysis. Residues G197 and G218–H219 each bind 3-amino-2-oxopropyl phosphate.

This sequence belongs to the PNP synthase family. Homooctamer; tetramer of dimers.

The protein resides in the cytoplasm. The catalysed reaction is 3-amino-2-oxopropyl phosphate + 1-deoxy-D-xylulose 5-phosphate = pyridoxine 5'-phosphate + phosphate + 2 H2O + H(+). It functions in the pathway cofactor biosynthesis; pyridoxine 5'-phosphate biosynthesis; pyridoxine 5'-phosphate from D-erythrose 4-phosphate: step 5/5. Functionally, catalyzes the complicated ring closure reaction between the two acyclic compounds 1-deoxy-D-xylulose-5-phosphate (DXP) and 3-amino-2-oxopropyl phosphate (1-amino-acetone-3-phosphate or AAP) to form pyridoxine 5'-phosphate (PNP) and inorganic phosphate. This is Pyridoxine 5'-phosphate synthase from Pseudomonas putida (strain ATCC 47054 / DSM 6125 / CFBP 8728 / NCIMB 11950 / KT2440).